We begin with the raw amino-acid sequence, 211 residues long: ATP phosphoribosyltransferase (211 aa).

Belongs to the ATP phosphoribosyltransferase family. Short subfamily. As to quaternary structure, heteromultimer composed of HisG and HisZ subunits.

It localises to the cytoplasm. It catalyses the reaction 1-(5-phospho-beta-D-ribosyl)-ATP + diphosphate = 5-phospho-alpha-D-ribose 1-diphosphate + ATP. Its pathway is amino-acid biosynthesis; L-histidine biosynthesis; L-histidine from 5-phospho-alpha-D-ribose 1-diphosphate: step 1/9. Catalyzes the condensation of ATP and 5-phosphoribose 1-diphosphate to form N'-(5'-phosphoribosyl)-ATP (PR-ATP). Has a crucial role in the pathway because the rate of histidine biosynthesis seems to be controlled primarily by regulation of HisG enzymatic activity. The sequence is that of ATP phosphoribosyltransferase from Thermosynechococcus vestitus (strain NIES-2133 / IAM M-273 / BP-1).